A 196-amino-acid chain; its full sequence is Protein hunchback (196 aa).

Disordered stretches follow at residues 16 to 60 (SHHH…NTNL) and 90 to 196 (AMTP…KYMA). Residues 17–30 (HHHHHHHAHHSYHQ) show a composition bias toward basic residues. Residues 92 to 103 (TPSSSNNDQNSP) show a composition bias toward polar residues. A compositionally biased stretch (low complexity) spans 125 to 144 (PTATTTTTPAAAAPTTTAAT). The span at 176–196 (AEREKEHDLMSNSSEDMKYMA) shows a compositional bias: basic and acidic residues.

It belongs to the hunchback C2H2-type zinc-finger protein family.

The protein localises to the nucleus. In terms of biological role, gap class segmentation protein that controls development of head structures. The protein is Protein hunchback (hb) of Drosophila silvestris (Fruit fly).